A 427-amino-acid polypeptide reads, in one-letter code: 3-phosphoshikimate 1-carboxyvinyltransferase (427 aa).

Lys22, Ser23, and Arg27 together coordinate 3-phosphoshikimate. Lys22 is a phosphoenolpyruvate binding site. Gly96 and Arg124 together coordinate phosphoenolpyruvate. Ser169, Ser170, Gln171, Ser197, Asp313, Asn336, and Lys340 together coordinate 3-phosphoshikimate. Gln171 serves as a coordination point for phosphoenolpyruvate. Asp313 (proton acceptor) is an active-site residue. Phosphoenolpyruvate is bound by residues Arg344, Arg386, and Lys411.

It belongs to the EPSP synthase family. In terms of assembly, monomer.

It localises to the cytoplasm. It carries out the reaction 3-phosphoshikimate + phosphoenolpyruvate = 5-O-(1-carboxyvinyl)-3-phosphoshikimate + phosphate. It functions in the pathway metabolic intermediate biosynthesis; chorismate biosynthesis; chorismate from D-erythrose 4-phosphate and phosphoenolpyruvate: step 6/7. Its function is as follows. Catalyzes the transfer of the enolpyruvyl moiety of phosphoenolpyruvate (PEP) to the 5-hydroxyl of shikimate-3-phosphate (S3P) to produce enolpyruvyl shikimate-3-phosphate and inorganic phosphate. The sequence is that of 3-phosphoshikimate 1-carboxyvinyltransferase from Klebsiella pneumoniae subsp. pneumoniae (strain ATCC 700721 / MGH 78578).